A 304-amino-acid polypeptide reads, in one-letter code: Ornithine carbamoyltransferase (304 aa).

Carbamoyl phosphate-binding positions include 47–50, R98, and 125–128; these read STRT and HPCQ. Residues N156, D221, and 225-226 each bind L-ornithine; that span reads SM. Residues 262–263 and R290 contribute to the carbamoyl phosphate site; that span reads CL.

It belongs to the aspartate/ornithine carbamoyltransferase superfamily. OTCase family.

The protein localises to the cytoplasm. The catalysed reaction is carbamoyl phosphate + L-ornithine = L-citrulline + phosphate + H(+). It participates in amino-acid biosynthesis; L-arginine biosynthesis; L-arginine from L-ornithine and carbamoyl phosphate: step 1/3. Functionally, reversibly catalyzes the transfer of the carbamoyl group from carbamoyl phosphate (CP) to the N(epsilon) atom of ornithine (ORN) to produce L-citrulline. This Methanococcus maripaludis (strain C5 / ATCC BAA-1333) protein is Ornithine carbamoyltransferase.